The primary structure comprises 220 residues: Large ribosomal subunit protein uL3 (220 aa).

The interval 137-159 (GASHGAHKNHRKPGSIGGASTPS) is disordered.

The protein belongs to the universal ribosomal protein uL3 family. In terms of assembly, part of the 50S ribosomal subunit. Forms a cluster with proteins L14 and L19.

Its function is as follows. One of the primary rRNA binding proteins, it binds directly near the 3'-end of the 23S rRNA, where it nucleates assembly of the 50S subunit. The protein is Large ribosomal subunit protein uL3 of Renibacterium salmoninarum (strain ATCC 33209 / DSM 20767 / JCM 11484 / NBRC 15589 / NCIMB 2235).